The sequence spans 199 residues: Single-stranded DNA-binding protein 2 (199 aa).

The SSB domain occupies 1-110 (MAGETVITVV…LDVDEVGASL (110 aa)). Residues 114-199 (TAKVTKTSGQ…GGGYSDEPPF (86 aa)) are disordered. Residues 123 to 156 (QGRGGQGGYGGGGGGQGGGGWGGGPGGGQQGGGA) show a composition bias toward gly residues. Low complexity predominate over residues 157 to 166 (PADDPWATGG). Residues 167–193 (APAGGQQGGGGQGGGGWGGGSGGGGGY) show a composition bias toward gly residues.

In terms of assembly, homotetramer. Phosphorylated on tyrosine residue(s) when expressed in E.coli.

It is found in the cytoplasm. The protein resides in the nucleoid. This Streptomyces coelicolor (strain ATCC BAA-471 / A3(2) / M145) protein is Single-stranded DNA-binding protein 2 (ssb2).